The sequence spans 168 residues: Crossover junction endodeoxyribonuclease RuvC (168 aa).

Residues D10, E70, and D143 contribute to the active site. The Mg(2+) site is built by D10, E70, and D143.

Belongs to the RuvC family. As to quaternary structure, homodimer which binds Holliday junction (HJ) DNA. The HJ becomes 2-fold symmetrical on binding to RuvC with unstacked arms; it has a different conformation from HJ DNA in complex with RuvA. In the full resolvosome a probable DNA-RuvA(4)-RuvB(12)-RuvC(2) complex forms which resolves the HJ. The cofactor is Mg(2+).

It localises to the cytoplasm. The enzyme catalyses Endonucleolytic cleavage at a junction such as a reciprocal single-stranded crossover between two homologous DNA duplexes (Holliday junction).. Its function is as follows. The RuvA-RuvB-RuvC complex processes Holliday junction (HJ) DNA during genetic recombination and DNA repair. Endonuclease that resolves HJ intermediates. Cleaves cruciform DNA by making single-stranded nicks across the HJ at symmetrical positions within the homologous arms, yielding a 5'-phosphate and a 3'-hydroxyl group; requires a central core of homology in the junction. The consensus cleavage sequence is 5'-(A/T)TT(C/G)-3'. Cleavage occurs on the 3'-side of the TT dinucleotide at the point of strand exchange. HJ branch migration catalyzed by RuvA-RuvB allows RuvC to scan DNA until it finds its consensus sequence, where it cleaves and resolves the cruciform DNA. In Roseiflexus sp. (strain RS-1), this protein is Crossover junction endodeoxyribonuclease RuvC.